The primary structure comprises 388 residues: Coproporphyrin III ferrochelatase (388 aa).

Fe-coproporphyrin III contacts are provided by S59 and Y124. Fe(2+)-binding residues include H186 and E276. The tract at residues 349–369 (QSPQHASRAVTDAAATGRRGD) is disordered.

It belongs to the ferrochelatase family.

The protein localises to the cytoplasm. It carries out the reaction Fe-coproporphyrin III + 2 H(+) = coproporphyrin III + Fe(2+). Its pathway is porphyrin-containing compound metabolism; protoheme biosynthesis. In terms of biological role, involved in coproporphyrin-dependent heme b biosynthesis. Catalyzes the insertion of ferrous iron into coproporphyrin III to form Fe-coproporphyrin III. This is Coproporphyrin III ferrochelatase from Frankia alni (strain DSM 45986 / CECT 9034 / ACN14a).